The chain runs to 710 residues: MSNPLPRKLFVTTALPYANGAFHIGHIMEYIQADIWVRFQRMQGNQVDFVGADDAHGAPIMIAAEKAGLTPQQFVSNIAAGRKQYLDGFHIAFDNWSSTDSPENHQLAQQIYLDLKKAGLIASKTVEQFFDPEKNMFLPDRYIKGECPKCHTKDQYGDNCEVCAAVYSPTDLINPYSALTGATPVLKHSEHFFFTLSDPRCVAFLEEWVSGLDTDGKTHLQAEVANKVKEWFSARTNPDGTISEGLNDWDISRDAPYFGIEIPDAPGKYFYVWLDAPVGYLASLKNLLDKRGENFDAYMAEPALEQIHFIGKDIVNFHTLFWPAMLKFSGRKTPNKVFVHGFLTVNNGEKMSKSRGTGLDPLKYLSLGMNPEWLRYYLANKLSARNEDIDFNPEDFIARVNSDLIGKYVNIASRAAGFIAKKFDGRVVSDWATADDVFISKLRNVASEIQALYDQREYGKALRTIMEQADAINAYVDANKPWELAKKPENSAALQEVCSRLLEAFRILTIYLKPVLPELAKQVEALLNIAPLQWSDVGTPLPHNHQVNPYSHLMTRVEPKMLDALFDMPAVVDVTVNVPNGTSETEVAADSTIEAIAPEIKIDDFAKIDLRIAKIVNCEHVEGSDKLLRLTLDMGEGRLRNVFSGIKSAYQPEDLIGKLTVMVANLAPRKMKFGISEGMVLAASAADEKSNPGIYILNPWPGAEPGMRVG.

The 'HIGH' region signature appears at 16 to 26 (PYANGAFHIGH). Residues Cys147, Cys150, Cys160, and Cys163 each contribute to the Zn(2+) site. Positions 350 to 354 (KMSKS) match the 'KMSKS' region motif. Lys353 lines the ATP pocket. Positions 604 to 710 (DFAKIDLRIA…PGAEPGMRVG (107 aa)) constitute a tRNA-binding domain.

The protein belongs to the class-I aminoacyl-tRNA synthetase family. MetG type 1 subfamily. As to quaternary structure, homodimer. Zn(2+) serves as cofactor.

Its subcellular location is the cytoplasm. The catalysed reaction is tRNA(Met) + L-methionine + ATP = L-methionyl-tRNA(Met) + AMP + diphosphate. Its function is as follows. Is required not only for elongation of protein synthesis but also for the initiation of all mRNA translation through initiator tRNA(fMet) aminoacylation. This is Methionine--tRNA ligase from Herminiimonas arsenicoxydans.